The primary structure comprises 504 residues: Maturase K (504 aa).

This sequence belongs to the intron maturase 2 family. MatK subfamily.

Its subcellular location is the plastid. The protein resides in the chloroplast. Its function is as follows. Usually encoded in the trnK tRNA gene intron. Probably assists in splicing its own and other chloroplast group II introns. The protein is Maturase K of Quercus rubra (Northern red oak).